Reading from the N-terminus, the 380-residue chain is Glycogenin-2 (380 aa).

UDP-binding residues include L10, Y16, and R95. UDP-alpha-D-glucose contacts are provided by L10, Y16, R95, K104, D120, A121, D122, N158, T159, D185, D188, and Q189. UDP-binding residues include D120, A121, and D122. D120 serves as a coordination point for Mn(2+). D122 is a Mn(2+) binding site. O-linked (Glc...) tyrosine glycosylation is found at Y230 and Y232. Residues H249, G252, and K255 each contribute to the UDP site. Position 249 (H249) interacts with Mn(2+). UDP-alpha-D-glucose is bound by residues G252 and K255. Residues 331-355 are disordered; sequence SVDRNASQKSTAEKHDIEKPTSKPQ. Residues 341–351 are compositionally biased toward basic and acidic residues; that stretch reads TAEKHDIEKPT. O-linked (Glc...) tyrosine glycosylation occurs at Y367.

The protein belongs to the glycosyltransferase 8 family. Glycogenin subfamily. As to quaternary structure, interacts with glycogen synthase GSY2. It depends on Mn(2+) as a cofactor.

The protein localises to the cytoplasm. It is found in the vacuole. It catalyses the reaction L-tyrosyl-[glycogenin] + UDP-alpha-D-glucose = alpha-D-glucosyl-L-tyrosyl-[glycogenin] + UDP + H(+). It carries out the reaction [1,4-alpha-D-glucosyl](n)-L-tyrosyl-[glycogenin] + UDP-alpha-D-glucose = [1,4-alpha-D-glucosyl](n+1)-L-tyrosyl-[glycogenin] + UDP + H(+). In terms of biological role, self-glucosylating initiator of glycogen synthesis. It catalyzes the formation of a short alpha (1,4)-glucosyl chain covalently attached via a glucose 1-O-tyrosyl linkage to internal tyrosine residues and these chains act as primers for the elongation reaction catalyzed by glycogen synthase. Capable of transferring glucosyl residues to unbound acceptors such as free oligoglucans or oligoglucan derivatives. The protein is Glycogenin-2 of Saccharomyces cerevisiae (strain ATCC 204508 / S288c) (Baker's yeast).